Reading from the N-terminus, the 98-residue chain is MPIIYMNIMLSFIISLLGMLIYRSHLMSSLLCLEGMMLSLFIMSTLMALNMHFPLANIVPVALLVFAACEAAVGLALLVSISNTYGLDYVHNLSLLQC.

3 helical membrane-spanning segments follow: residues M1–I21, S29–L49, and I58–L78.

Belongs to the complex I subunit 4L family. In terms of assembly, core subunit of respiratory chain NADH dehydrogenase (Complex I) which is composed of 45 different subunits.

It is found in the mitochondrion inner membrane. It carries out the reaction a ubiquinone + NADH + 5 H(+)(in) = a ubiquinol + NAD(+) + 4 H(+)(out). In terms of biological role, core subunit of the mitochondrial membrane respiratory chain NADH dehydrogenase (Complex I) which catalyzes electron transfer from NADH through the respiratory chain, using ubiquinone as an electron acceptor. Part of the enzyme membrane arm which is embedded in the lipid bilayer and involved in proton translocation. This chain is NADH-ubiquinone oxidoreductase chain 4L (MT-ND4L), found in Semnopithecus entellus (Northern plains gray langur).